We begin with the raw amino-acid sequence, 170 residues long: Shikimate kinase (170 aa).

Leu-11–Thr-16 is a binding site for ATP. Residue Ser-15 participates in Mg(2+) binding. Substrate is bound by residues Asp-33, Arg-57, and Gly-79. Position 119 (Arg-119) interacts with ATP. Arg-137 is a binding site for substrate.

This sequence belongs to the shikimate kinase family. In terms of assembly, monomer. Mg(2+) is required as a cofactor.

Its subcellular location is the cytoplasm. The enzyme catalyses shikimate + ATP = 3-phosphoshikimate + ADP + H(+). It participates in metabolic intermediate biosynthesis; chorismate biosynthesis; chorismate from D-erythrose 4-phosphate and phosphoenolpyruvate: step 5/7. Catalyzes the specific phosphorylation of the 3-hydroxyl group of shikimic acid using ATP as a cosubstrate. The protein is Shikimate kinase of Clostridium botulinum (strain ATCC 19397 / Type A).